The following is a 486-amino-acid chain: Deleted in azoospermia protein 3 (486 aa).

Positions 1–10 (MSAANPETPN) are enriched in polar residues. A disordered region spans residues 1–27 (MSAANPETPNSTISREASTQSSSAAAS). Residues 11–27 (STISREASTQSSSAAAS) show a composition bias toward low complexity. In terms of domain architecture, RRM spans 40–115 (NTVFVGGIDA…KKLKLGPAIR (76 aa)). DAZ domains lie at 167-190 (AYSAYPHSPGQVITGCQLLVYNYQ), 191-214 (EYPTYPDSAFQVTTGYQLPVYNYQ), 215-238 (PFPAYPRSPFQVTAGYQLPVYNYQ), 239-262 (AFPAYPNSPFQVATGYQFPVYNYQ), 263-286 (PFPAYPSSPFQVTAGYQLPVYNYQ), 287-310 (AFPAYPNSPFQVATGYQFPVYNYQ), 311-334 (AFPAYPNSPVQVTTGYQLPVYNYQ), 335-358 (AFPAYPNSPFQVATGYQFPVYNYQ), 359-382 (AFPAYPNSPVQVTTGYQLPVYNYQ), 383-406 (AFPAYPNSPFQVATGYQFPVYNYQ), 407-430 (AFPAYPNSPVQVTTGYQLPVYNYQ), and 431-454 (AFPAYPNSAVQVTTGYQFHVYNYQ).

It belongs to the RRM DAZ family. As to quaternary structure, forms a heterodimer with BOLL and DAZL. Interacts with PUM2, DAZAP1, DAZAP2, DZIP1 and DZIP3. Testis specific.

The protein resides in the cytoplasm. It is found in the nucleus. In terms of biological role, RNA-binding protein that plays an essential role in spermatogenesis. May act by binding to the 3'-UTR of mRNAs and regulating their translation. This Homo sapiens (Human) protein is Deleted in azoospermia protein 3 (DAZ3).